We begin with the raw amino-acid sequence, 179 residues long: Laminin-binding fimbrial subunit ElfA (179 aa).

The signal sequence occupies residues 1-21 (MKKSVLTAFITVVCATSSVMA).

This sequence belongs to the fimbrial protein family.

It localises to the fimbrium. Part of the elfADCG fimbrial operon, which could be required for adherence to host epithelial cells. ElfA is an accessory colonization factor that contributes to adherence of bacteria to human intestinal epithelial cells and to animal intestinal tissue in vitro. Binds specifically to laminin, but not to fibronectin or collagen type IV. The chain is Laminin-binding fimbrial subunit ElfA (elfA) from Escherichia coli O157:H7.